The chain runs to 365 residues: UDP-N-acetylglucosamine--N-acetylmuramyl-(pentapeptide) pyrophosphoryl-undecaprenol N-acetylglucosamine transferase (365 aa).

UDP-N-acetyl-alpha-D-glucosamine is bound by residues 19–21 (TGG), Asn131, Arg170, Ser201, Ile255, 274–279 (ALTVTE), and Gln300.

Belongs to the glycosyltransferase 28 family. MurG subfamily.

The protein localises to the cell inner membrane. It carries out the reaction di-trans,octa-cis-undecaprenyl diphospho-N-acetyl-alpha-D-muramoyl-L-alanyl-D-glutamyl-meso-2,6-diaminopimeloyl-D-alanyl-D-alanine + UDP-N-acetyl-alpha-D-glucosamine = di-trans,octa-cis-undecaprenyl diphospho-[N-acetyl-alpha-D-glucosaminyl-(1-&gt;4)]-N-acetyl-alpha-D-muramoyl-L-alanyl-D-glutamyl-meso-2,6-diaminopimeloyl-D-alanyl-D-alanine + UDP + H(+). It participates in cell wall biogenesis; peptidoglycan biosynthesis. In terms of biological role, cell wall formation. Catalyzes the transfer of a GlcNAc subunit on undecaprenyl-pyrophosphoryl-MurNAc-pentapeptide (lipid intermediate I) to form undecaprenyl-pyrophosphoryl-MurNAc-(pentapeptide)GlcNAc (lipid intermediate II). In Acinetobacter baumannii (strain SDF), this protein is UDP-N-acetylglucosamine--N-acetylmuramyl-(pentapeptide) pyrophosphoryl-undecaprenol N-acetylglucosamine transferase.